A 556-amino-acid polypeptide reads, in one-letter code: Dihydroxy-acid dehydratase (556 aa).

D78 is a binding site for Mg(2+). C119 is a [2Fe-2S] cluster binding site. Residues D120 and K121 each contribute to the Mg(2+) site. K121 carries the post-translational modification N6-carboxylysine. C191 provides a ligand contact to [2Fe-2S] cluster. E442 is a Mg(2+) binding site. S468 (proton acceptor) is an active-site residue.

The protein belongs to the IlvD/Edd family. In terms of assembly, homodimer. It depends on [2Fe-2S] cluster as a cofactor. Mg(2+) serves as cofactor.

It catalyses the reaction (2R)-2,3-dihydroxy-3-methylbutanoate = 3-methyl-2-oxobutanoate + H2O. The catalysed reaction is (2R,3R)-2,3-dihydroxy-3-methylpentanoate = (S)-3-methyl-2-oxopentanoate + H2O. Its pathway is amino-acid biosynthesis; L-isoleucine biosynthesis; L-isoleucine from 2-oxobutanoate: step 3/4. It participates in amino-acid biosynthesis; L-valine biosynthesis; L-valine from pyruvate: step 3/4. Functions in the biosynthesis of branched-chain amino acids. Catalyzes the dehydration of (2R,3R)-2,3-dihydroxy-3-methylpentanoate (2,3-dihydroxy-3-methylvalerate) into 2-oxo-3-methylpentanoate (2-oxo-3-methylvalerate) and of (2R)-2,3-dihydroxy-3-methylbutanoate (2,3-dihydroxyisovalerate) into 2-oxo-3-methylbutanoate (2-oxoisovalerate), the penultimate precursor to L-isoleucine and L-valine, respectively. The sequence is that of Dihydroxy-acid dehydratase from Caldanaerobacter subterraneus subsp. tengcongensis (strain DSM 15242 / JCM 11007 / NBRC 100824 / MB4) (Thermoanaerobacter tengcongensis).